A 622-amino-acid chain; its full sequence is Mitochondrial Rho GTPase 2 (622 aa).

Residues 1 to 596 (MRRDVRILLL…ELHPTPFWLR (596 aa)) are Cytoplasmic-facing. One can recognise a Miro 1 domain in the interval 2-168 (RRDVRILLLG…FYYAQKAVLH (167 aa)). Positions 16, 17, 18, and 19 each coordinate GTP. Residue threonine 18 coordinates Mg(2+). Mg(2+) is bound at residue aspartate 57. GTP is bound at residue serine 59. Lysine 96 participates in a covalent cross-link: Glycyl lysine isopeptide (Lys-Gly) (interchain with G-Cter in ubiquitin). GTP contacts are provided by asparagine 118, lysine 119, aspartate 121, alanine 149, and lysine 150. A Glycyl lysine isopeptide (Lys-Gly) (interchain with G-Cter in ubiquitin) cross-link involves residue lysine 119. Lysine 164 participates in a covalent cross-link: Glycyl lysine isopeptide (Lys-Gly) (interchain with G-Cter in ubiquitin). 2 EF-hand domains span residues 184 to 219 (ACAQ…CFGH) and 304 to 339 (RGYQ…FSVA). Residues aspartate 197, aspartate 199, aspartate 201, glutamate 208, aspartate 317, aspartate 319, aspartate 321, and glutamate 328 each contribute to the Ca(2+) site. The Miro 2 domain occupies 415–580 (RSVLMCKVLG…FTQLATMATF (166 aa)). Residues glycine 427, glycine 429, lysine 430, serine 431, and alanine 432 each coordinate GTP. Serine 431 lines the Mg(2+) pocket. Glutamate 475 is a Mg(2+) binding site. The GTP site is built by lysine 529, aspartate 531, and cysteine 560. A helical; Anchor for type IV membrane protein transmembrane segment spans residues 597–619 (GVLVAVGTAVAAVLSFSLYRVLV). At 620–622 (KSR) the chain is on the mitochondrial intermembrane side.

Belongs to the mitochondrial Rho GTPase family. Homodimer. Interacts with the kinesin-binding proteins TRAK1/OIP106 and TRAK2/GRIF1, forming a link between mitochondria and the trafficking apparatus of the microtubules. Interacts with ARMCX3. Found in a complex with KIF5B, OGT, RHOT1 and TRAK1. In terms of processing, ubiquitinated by PRKN in a PINK1-dependent manner, leading to its degradation.

The protein localises to the mitochondrion outer membrane. It carries out the reaction GTP + H2O = GDP + phosphate + H(+). It catalyses the reaction ATP + H2O = ADP + phosphate + H(+). The enzyme catalyses UTP + H2O = UDP + phosphate + H(+). Functionally, atypical mitochondrial nucleoside-triphosphatase (NTPase) involved in mitochondrial trafficking. Probably involved in control of anterograde transport of mitochondria and their subcellular distribution. Can hydrolyze GTP, ATP and UTP. This is Mitochondrial Rho GTPase 2 (Rhot2) from Rattus norvegicus (Rat).